The chain runs to 84 residues: Gas vesicle protein M1 (84 aa).

An interacts with GvpL1 region spans residues 1–25 (MEPTKDETHAIVEFVDVLLRDGAVI). Residues 5-21 (KDETHAIVEFVDVLLRD) are alpha helix 1. 2 beta-strand regions span residues 27–29 (ADV) and 41–43 (ISL). Residues 44–48 (RAAIA) carry the Conserved in GvpJ1/2 but not GvpA motif. Alpha helix stretches follow at residues 46 to 56 (AIAGMTTMTEY) and 62 to 84 (WDAA…RRED).

Belongs to the gas vesicle GvpA family. GvpF to GvpM interact with each other in vitro, and may form multi-subunit complex(es). Might interact with GvpA1.

It localises to the gas vesicle. Functionally, proteins GvpF to GvpM might be involved in nucleating gas vesicle formation. A minor component of the gas vesicle. Gas vesicles are hollow, gas filled proteinaceous nanostructures found in several microbial planktonic microorganisms. They allow positioning of halobacteria at the optimal depth for growth in the poorly aerated, shallow brine pools of their habitat. In terms of biological role, expression of a 9.5 kb p-vac DNA fragment containing 2 divergently transcribed regions (gvpD-gvpE-gvpF-gvpG-gvpH-gvpI-gvpJ-gvpK-gvpL-gvpM and gvpA-gvpC-gvpN-gvpO) allows H.volcanii to produce gas vesicles. All site-directed mutagenesis is tested in H.volcanii. A minimal gas vesicle can be made in H.volcanii by gvpA1-gvpO1 plus gvpF1-gvpG1-gvpJ1-gvpK1-gvpL1-gvpM1; lack of enough GvpJ1 prevents formation. A similar region restores gas vesicle production in H.halobium without the p-vac locus, but it still has the c-vac locus. This Halobacterium salinarum (strain ATCC 700922 / JCM 11081 / NRC-1) (Halobacterium halobium) protein is Gas vesicle protein M1 (gvpM11).